The chain runs to 454 residues: Butyrophilin-like protein 2 (454 aa).

Over 1–6 (MVDCPR) the chain is Cytoplasmic. A helical; Signal-anchor for type II membrane protein membrane pass occupies residues 7-23 (YSLSGVAASFLFVLLTI). Topologically, residues 24-454 (KHPDDFRVVG…KTARFPLSGW (431 aa)) are extracellular. Ig-like V-type domains lie at 27–140 (DDFR…VLLQ), 148–234 (PNIH…ATIA), 244–355 (ASVS…ARVD), and 365–452 (PRIT…FPLS). 4 disulfide bridges follow: cysteine 50–cysteine 124, cysteine 164–cysteine 218, cysteine 267–cysteine 341, and cysteine 381–cysteine 435. Residues asparagine 210, asparagine 296, asparagine 427, and asparagine 432 are each glycosylated (N-linked (GlcNAc...) asparagine).

This sequence belongs to the immunoglobulin superfamily. BTN/MOG family. In terms of tissue distribution, highly expressed in intestine and at reduced levels in lung and stomach. Also expressed in thymus, spleen, lymph nodes, T-cells, B-cells, and macrophages.

It localises to the membrane. Its function is as follows. Negative regulator of T-cell proliferation. This chain is Butyrophilin-like protein 2, found in Mus musculus (Mouse).